The chain runs to 120 residues: Large ribosomal subunit protein bL17 (120 aa).

Belongs to the bacterial ribosomal protein bL17 family. Part of the 50S ribosomal subunit. Contacts protein L32.

In Mesomycoplasma hyopneumoniae (strain 7448) (Mycoplasma hyopneumoniae), this protein is Large ribosomal subunit protein bL17.